A 625-amino-acid chain; its full sequence is Alpha-protein kinase vwkA (625 aa).

A compositionally biased stretch (basic and acidic residues) spans 1–15; that stretch reads MESKYVLSTEKESKT. The interval 1-64 is disordered; sequence MESKYVLSTE…GLSSGGSKTH (64 aa). Composition is skewed to polar residues over residues 25-39 and 46-63; these read DMDSISNSLSKTSLG and SLKTDASRSGLSSGGSKT. The stretch at 87–114 forms a coiled coil; the sequence is TKDSITLAKEKEKKIEKRNEEIKLTFKA. Residues 122–322 form the VWFA domain; that stretch reads DLLFIVDCTG…KMNERIFISI (201 aa). One can recognise an Alpha-type protein kinase domain in the interval 386–600; it reads TCLSSSYEMK…HCKKLGLTIP (215 aa). 570 to 576 provides a ligand contact to ATP; sequence GSCNLGK. Positions 602 to 625 are disordered; it reads FTSSSSTSSSSRSTSSSSSISYSY.

Belongs to the protein kinase superfamily. Alpha-type protein kinase family. ALPK subfamily. Interacts with calmodulin; in the presence of calcium. Post-translationally, autophosphorylated, in vitro.

It is found in the cytoplasm. Its subcellular location is the cytosol. The protein resides in the perinuclear region. The protein localises to the contractile vacuole membrane. The catalysed reaction is L-seryl-[protein] + ATP = O-phospho-L-seryl-[protein] + ADP + H(+). The enzyme catalyses L-threonyl-[protein] + ATP = O-phospho-L-threonyl-[protein] + ADP + H(+). With respect to regulation, autophosphorylation activity enhanced by calcium/calmodulin. Functionally, displays a modest preference for threonine over serine residues. Does not phosphorylate myosin II, however can phosphorylate MBP, in vitro. May be involved in the regulation of myosin II function during cytokinesis. Overexpression leads to impaired cell proliferation in suspension culture and fails to develop beyond the mound stage. Both overexpression and absence of the gene can result in defects in cytokinesis and alterations in myosin II abundance and assembly. The protein is Alpha-protein kinase vwkA (vwkA) of Dictyostelium discoideum (Social amoeba).